A 318-amino-acid polypeptide reads, in one-letter code: tRNA uridine(34) hydroxylase (318 aa).

In terms of domain architecture, Rhodanese spans 123–217 (EDDDTVIIDA…YGKDPETKGQ (95 aa)). The active-site Cysteine persulfide intermediate is the Cys177.

It belongs to the TrhO family.

The catalysed reaction is uridine(34) in tRNA + AH2 + O2 = 5-hydroxyuridine(34) in tRNA + A + H2O. In terms of biological role, catalyzes oxygen-dependent 5-hydroxyuridine (ho5U) modification at position 34 in tRNAs. The chain is tRNA uridine(34) hydroxylase from Staphylococcus aureus (strain bovine RF122 / ET3-1).